We begin with the raw amino-acid sequence, 175 residues long: Transcription factor HES-3 (175 aa).

The 49-residue stretch at 1–49 folds into the bHLH domain; sequence MEKKRRARINVSLEQLRSLLERHYSHQIRKRKLEKADILELSVKYMRSL. One can recognise an Orange domain in the interval 65–98; the sequence is YPSGFQGGLRGVSQRLRPGEGDSGLRCPLLLQRR. A disordered region spans residues 126 to 166; it reads RAAGGSHSPQSPLPLPGGLLESSTDVVAPHPASNCQAESTR. Residues 129–148 show a composition bias toward low complexity; the sequence is GGSHSPQSPLPLPGGLLESS. The WRPW motif signature appears at 172 to 175; that stretch reads WRPW.

Transcription repression requires formation of a complex with a corepressor protein of the Groucho/TLE family.

The protein localises to the nucleus. In terms of biological role, transcriptional repressor of genes that require a bHLH protein for their transcription. The sequence is that of Transcription factor HES-3 (Hes3) from Mus musculus (Mouse).